A 387-amino-acid chain; its full sequence is Protein disulfide isomerase pTAC5, chloroplastic (387 aa).

The N-terminal 40 residues, 1-40, are a transit peptide targeting the chloroplast; it reads MASSSLPLSLPFPLRSLTSTTRSLPFQCSPLFFSIPSSIV. 2 coiled-coil regions span residues 72–106 and 143–163; these read EQRWIRERESLLQEISDLQLRIQSLESRNSQLGNS and REQIVEEVEEEEKRVIIAEEK. The segment at 318 to 387 adopts a CR-type zinc-finger fold; the sequence is PVDRSESTNT…CDVCDGKKNL (70 aa).

In terms of assembly, interacts with HSP21; the formed complex associates with the plastid-encoded RNA polymerase (PEP) complex not only during transcription initiation, but also during elongation and termination, and with a stronger efficiency in illuminated chloroplasts. Binds to promoter regions of PEP-dependent genes, especially after a heat stress. Interacts with FLN2.

It is found in the plastid. Its subcellular location is the chloroplast stroma. It localises to the chloroplast nucleoid. The enzyme catalyses Catalyzes the rearrangement of -S-S- bonds in proteins.. Its function is as follows. Exhibits zinc-dependent disulfide isomerase activity. Required for seedling and chloroplast development under heat stress, probably by maintaining plastid-encoded RNA polymerase (PEP)-dependent transcription. The polypeptide is Protein disulfide isomerase pTAC5, chloroplastic (Arabidopsis thaliana (Mouse-ear cress)).